The sequence spans 164 residues: S-ribosylhomocysteine lyase (164 aa).

Fe cation contacts are provided by histidine 54, histidine 58, and cysteine 128.

This sequence belongs to the LuxS family. As to quaternary structure, homodimer. Requires Fe cation as cofactor.

The enzyme catalyses S-(5-deoxy-D-ribos-5-yl)-L-homocysteine = (S)-4,5-dihydroxypentane-2,3-dione + L-homocysteine. Its function is as follows. Involved in the synthesis of autoinducer 2 (AI-2) which is secreted by bacteria and is used to communicate both the cell density and the metabolic potential of the environment. The regulation of gene expression in response to changes in cell density is called quorum sensing. Catalyzes the transformation of S-ribosylhomocysteine (RHC) to homocysteine (HC) and 4,5-dihydroxy-2,3-pentadione (DPD). The polypeptide is S-ribosylhomocysteine lyase (Campylobacter jejuni subsp. jejuni serotype O:2 (strain ATCC 700819 / NCTC 11168)).